A 107-amino-acid chain; its full sequence is ATP-dependent Clp protease adapter protein ClpS (107 aa).

This sequence belongs to the ClpS family. In terms of assembly, binds to the N-terminal domain of the chaperone ClpA.

Its function is as follows. Involved in the modulation of the specificity of the ClpAP-mediated ATP-dependent protein degradation. The polypeptide is ATP-dependent Clp protease adapter protein ClpS (Syntrophus aciditrophicus (strain SB)).